Here is a 161-residue protein sequence, read N- to C-terminus: Ribonuclease H (161 aa).

The RNase H type-1 domain maps to 2–141 (TNNEIIAATD…ADSLARQAAN (140 aa)). Mg(2+) is bound by residues Asp11, Glu46, Asp69, and Asp133.

It belongs to the RNase H family. Monomer. Mg(2+) serves as cofactor.

Its subcellular location is the cytoplasm. The enzyme catalyses Endonucleolytic cleavage to 5'-phosphomonoester.. Endonuclease that specifically degrades the RNA of RNA-DNA hybrids. The polypeptide is Ribonuclease H (Tropheryma whipplei (strain TW08/27) (Whipple's bacillus)).